We begin with the raw amino-acid sequence, 214 residues long: Transcriptional regulatory protein MctR (214 aa).

The Response regulatory domain occupies 8–124 (RVLLIDNHPL…EIVSAIETVA (117 aa)). At Asp-59 the chain carries 4-aspartylphosphate. Residues 143–208 (VEEGSDPLTP…GLIRYALDHG (66 aa)) enclose the HTH luxR-type domain. Residues 167–186 (NKEIAETLGITSATAETHRK) constitute a DNA-binding region (H-T-H motif).

It localises to the cytoplasm. Member of the two-component regulatory system MctS/MctR, which activates mctP expression. The chain is Transcriptional regulatory protein MctR from Rhizobium johnstonii (strain DSM 114642 / LMG 32736 / 3841) (Rhizobium leguminosarum bv. viciae).